The primary structure comprises 489 residues: NAC domain-containing protein 74 (489 aa).

The NAC domain occupies 9-159 (LPPGFGFHPK…AYVLCRITKR (151 aa)). Residues 108 to 165 (IGTKKTLVFHEGRPPTGRRTEWIMHEYYIDERECQACPDMKDAYVLCRITKRNDWIPG) mediate DNA binding. Residues 413 to 427 (KNQAHDVASTKRSDA) are compositionally biased toward basic and acidic residues. Residues 413-435 (KNQAHDVASTKRSDAGKPSTELS) form a disordered region. Residues 456–476 (WNMILVAGFAIGVAVVALHIG) traverse the membrane as a helical segment.

Widely expressed.

Its subcellular location is the nucleus. The protein localises to the cell membrane. Functionally, transcription activator involved in heat and endoplasmic reticulum (ER) stress responses. Regulates the expression of genes involved in ER protein folding and heat stress-responsive genes. Binds directly to the promoter of BZIP74 and regulates its expression in response to heat stress. This is NAC domain-containing protein 74 from Oryza sativa subsp. japonica (Rice).